Reading from the N-terminus, the 269-residue chain is Formamidopyrimidine-DNA glycosylase (269 aa).

The Schiff-base intermediate with DNA role is filled by Pro2. Glu3 (proton donor) is an active-site residue. The Proton donor; for beta-elimination activity role is filled by Lys57. Positions 90, 109, and 150 each coordinate DNA. An FPG-type zinc finger spans residues 235 to 269 (QVYGRAGEPCRACGTPIESAKHGQRSTFFCPRCQR). The Proton donor; for delta-elimination activity role is filled by Arg259.

Belongs to the FPG family. Monomer. Requires Zn(2+) as cofactor.

The enzyme catalyses Hydrolysis of DNA containing ring-opened 7-methylguanine residues, releasing 2,6-diamino-4-hydroxy-5-(N-methyl)formamidopyrimidine.. It catalyses the reaction 2'-deoxyribonucleotide-(2'-deoxyribose 5'-phosphate)-2'-deoxyribonucleotide-DNA = a 3'-end 2'-deoxyribonucleotide-(2,3-dehydro-2,3-deoxyribose 5'-phosphate)-DNA + a 5'-end 5'-phospho-2'-deoxyribonucleoside-DNA + H(+). Its function is as follows. Involved in base excision repair of DNA damaged by oxidation or by mutagenic agents. Acts as a DNA glycosylase that recognizes and removes damaged bases. Has a preference for oxidized purines, such as 7,8-dihydro-8-oxoguanine (8-oxoG). Has AP (apurinic/apyrimidinic) lyase activity and introduces nicks in the DNA strand. Cleaves the DNA backbone by beta-delta elimination to generate a single-strand break at the site of the removed base with both 3'- and 5'-phosphates. This is Formamidopyrimidine-DNA glycosylase from Serratia proteamaculans (strain 568).